Reading from the N-terminus, the 419-residue chain is Dual specificity mitogen-activated protein kinase kinase 7 (419 aa).

The residue at position 2 (Ala2) is an N-acetylalanine. Positions 2–30 form a coiled coil; it reads AASSLEQKLSRLEAKLKQENREARRRIDL. The span at 18–30 shows a compositional bias: basic and acidic residues; that stretch reads KQENREARRRIDL. Residues 18–76 are disordered; that stretch reads KQENREARRRIDLNLDISPQRPRPTLQLPLANDGGSRSPSSESSPQHPTPPARPRHMLG. Positions 36–63 are enriched in low complexity; sequence PQRPRPTLQLPLANDGGSRSPSSESSPQ. The tract at residues 37–57 is d domain; the sequence is QRPRPTLQLPLANDGGSRSPS. The 261-residue stretch at 120–380 folds into the Protein kinase domain; it reads LENLGEMGSG…YNKLLEHSFI (261 aa). ATP contacts are provided by residues 126–134 and Lys149; that span reads MGSGTCGQV. Asp243 serves as the catalytic Proton acceptor. Ser271 carries the phosphoserine; by MAP3K modification. Thr275 is subject to Phosphothreonine; by MAP3K. The tract at residues 377 to 400 is DVD domain; it reads HSFIKRYETLEVDVASWFKDVMAK. Ser411 carries the post-translational modification Phosphoserine.

This sequence belongs to the protein kinase superfamily. STE Ser/Thr protein kinase family. MAP kinase kinase subfamily. Interacts with isoform 1 of VRK2. Interacts (via its D domain) with its substrates MAPK8/JNK1, MAPK9/JNK2 and MAPK10/JNK3. Interacts (via its DVD domain) with MAP3Ks activators like MAP3K5/ASK1 and MAP3K1/MEKK1. Interacts with MAPK8IP1/JIP1, MAPK8IP2/JIP2 and MAPK8IP3/JIP3 scaffold proteins. Interacts with RASSF7, the interaction promotes phosphorylation. Found in a complex with SH3RF1, RAC1, MAP3K11/MLK3, MAPK8IP1/JIP1 and MAPK8/JNK1. Found in a complex with SH3RF1, RAC2, MAP3K7/TAK1, MAPK8IP1/JIP1, MAPK8/JNK1 and MAPK9/JNK2. It depends on Mg(2+) as a cofactor. Post-translationally, activated by phosphorylation on Ser-271 and Thr-275 by MAP kinase kinase kinases (MAP3Ks). In terms of tissue distribution, ubiquitous; with highest level of expression in skeletal muscle. Isoform 3 is found at low levels in placenta, fetal liver, and skeletal muscle.

Its subcellular location is the nucleus. It localises to the cytoplasm. It carries out the reaction L-seryl-[protein] + ATP = O-phospho-L-seryl-[protein] + ADP + H(+). The enzyme catalyses L-threonyl-[protein] + ATP = O-phospho-L-threonyl-[protein] + ADP + H(+). The catalysed reaction is L-tyrosyl-[protein] + ATP = O-phospho-L-tyrosyl-[protein] + ADP + H(+). Its activity is regulated as follows. Activated by phosphorylation by specific MAP kinase kinase kinases such as MAP3K1/MEKK1, MAP3K3/MEKK3, MAP3K11/MLK3 and MAP3K12/DLK. Its function is as follows. Dual specificity protein kinase which acts as an essential component of the MAP kinase signal transduction pathway. Essential component of the stress-activated protein kinase/c-Jun N-terminal kinase (SAP/JNK) signaling pathway. With MAP2K4/MKK4, is the one of the only known kinase to directly activate the stress-activated protein kinase/c-Jun N-terminal kinases MAPK8/JNK1, MAPK9/JNK2 and MAPK10/JNK3. MAP2K4/MKK4 and MAP2K7/MKK7 both activate the JNKs by phosphorylation, but they differ in their preference for the phosphorylation site in the Thr-Pro-Tyr motif. MAP2K4/MKK4 shows preference for phosphorylation of the Tyr residue and MAP2K7/MKK7 for the Thr residue. The monophosphorylation of JNKs on the Thr residue is sufficient to increase JNK activity indicating that MAP2K7/MKK7 is important to trigger JNK activity, while the additional phosphorylation of the Tyr residue by MAP2K4/MKK4 ensures optimal JNK activation. Has a specific role in JNK signal transduction pathway activated by pro-inflammatory cytokines. The MKK/JNK signaling pathway is also involved in mitochondrial death signaling pathway, including the release cytochrome c, leading to apoptosis. Part of a non-canonical MAPK signaling pathway, composed of the upstream MAP3K12 kinase and downstream MAP kinases MAPK1/ERK2 and MAPK3/ERK1, that enhances the AP-1-mediated transcription of APP in response to APOE. The polypeptide is Dual specificity mitogen-activated protein kinase kinase 7 (MAP2K7) (Homo sapiens (Human)).